A 154-amino-acid chain; its full sequence is Myoglobin (154 aa).

The Globin domain occupies 2–148; that stretch reads GLSDQEWQHV…FRNDMASKYK (147 aa). Histidine 65 is a nitrite binding site. Position 65 (histidine 65) interacts with O2. Histidine 94 lines the heme b pocket.

This sequence belongs to the globin family. Monomeric.

It localises to the cytoplasm. The protein localises to the sarcoplasm. It carries out the reaction Fe(III)-heme b-[protein] + nitric oxide + H2O = Fe(II)-heme b-[protein] + nitrite + 2 H(+). The enzyme catalyses H2O2 + AH2 = A + 2 H2O. Its function is as follows. Monomeric heme protein which primary function is to store oxygen and facilitate its diffusion within muscle tissues. Reversibly binds oxygen through a pentacoordinated heme iron and enables its timely and efficient release as needed during periods of heightened demand. Depending on the oxidative conditions of tissues and cells, and in addition to its ability to bind oxygen, it also has a nitrite reductase activity whereby it regulates the production of bioactive nitric oxide. Under stress conditions, like hypoxia and anoxia, it also protects cells against reactive oxygen species thanks to its pseudoperoxidase activity. This chain is Myoglobin (MB), found in Uria lomvia (Thick-billed murre).